A 210-amino-acid polypeptide reads, in one-letter code: Large ribosomal subunit protein uL4 (210 aa).

Residues 49-76 (HCTKTRSEVSGGGKKPWRQKHTGRARHG) form a disordered region. Over residues 63 to 76 (KPWRQKHTGRARHG) the composition is skewed to basic residues.

This sequence belongs to the universal ribosomal protein uL4 family. As to quaternary structure, part of the 50S ribosomal subunit.

Its function is as follows. One of the primary rRNA binding proteins, this protein initially binds near the 5'-end of the 23S rRNA. It is important during the early stages of 50S assembly. It makes multiple contacts with different domains of the 23S rRNA in the assembled 50S subunit and ribosome. In terms of biological role, forms part of the polypeptide exit tunnel. This chain is Large ribosomal subunit protein uL4, found in Thermodesulfovibrio yellowstonii (strain ATCC 51303 / DSM 11347 / YP87).